The sequence spans 288 residues: ATP synthase gamma chain (288 aa).

The protein belongs to the ATPase gamma chain family. F-type ATPases have 2 components, CF(1) - the catalytic core - and CF(0) - the membrane proton channel. CF(1) has five subunits: alpha(3), beta(3), gamma(1), delta(1), epsilon(1). CF(0) has three main subunits: a, b and c.

It is found in the cell inner membrane. Its function is as follows. Produces ATP from ADP in the presence of a proton gradient across the membrane. The gamma chain is believed to be important in regulating ATPase activity and the flow of protons through the CF(0) complex. The chain is ATP synthase gamma chain from Blochmanniella floridana.